Here is a 639-residue protein sequence, read N- to C-terminus: 3-oxocholoyl-CoA 4-desaturase (639 aa).

Gln101 lines the FMN pocket. 155-158 contributes to the substrate binding site; that stretch reads HAAH. Tyr160 serves as the catalytic Proton donor. Residues Arg208, Arg286, and 308 to 309 contribute to the FMN site; that span reads GR. Residues Cys332 and Cys335 each coordinate [4Fe-4S] cluster. Position 337 (Gln337) interacts with FAD. Residues Cys339 and Cys353 each contribute to the [4Fe-4S] cluster site. FAD-binding residues include Ala383, Glu402, Gln410, Lys420, and Val447.

This sequence in the N-terminal section; belongs to the NADH:flavin oxidoreductase/NADH oxidase family. The cofactor is FMN. FAD is required as a cofactor. Requires [4Fe-4S] cluster as cofactor.

The catalysed reaction is 7alpha,12alpha-dihydroxy-3-oxochol-24-oyl-CoA + NAD(+) = 7alpha,12alpha-dihydroxy-3-oxochol-4-en-24-oyl-CoA + NADH + H(+). It carries out the reaction 7alpha-hydroxy-3-oxochol-24-oyl-CoA + NAD(+) = 7alpha-hydroxy-3-oxochol-4-en-24-oyl-CoA + NADH + H(+). The protein operates within lipid metabolism; bile acid degradation. Its function is as follows. Stereo-specific NAD(H)-dependent 3-oxo-delta4-cholenoic acid oxidoreductase involved in bile acid 7alpha-dehydroxylation. The protein is 3-oxocholoyl-CoA 4-desaturase of Clostridium scindens (strain JCM 10418 / VPI 12708).